Consider the following 304-residue polypeptide: UDP-N-acetylenolpyruvoylglucosamine reductase (304 aa).

Residues 34-198 form the FAD-binding PCMH-type domain; it reads IGGKADFLVW…LEVVFALRPG (165 aa). R177 is an active-site residue. Residue S227 is the Proton donor of the active site. E297 is a catalytic residue.

The protein belongs to the MurB family. Requires FAD as cofactor.

The protein localises to the cytoplasm. It carries out the reaction UDP-N-acetyl-alpha-D-muramate + NADP(+) = UDP-N-acetyl-3-O-(1-carboxyvinyl)-alpha-D-glucosamine + NADPH + H(+). The protein operates within cell wall biogenesis; peptidoglycan biosynthesis. Its function is as follows. Cell wall formation. The protein is UDP-N-acetylenolpyruvoylglucosamine reductase of Geobacillus kaustophilus (strain HTA426).